The chain runs to 588 residues: Hyaluronan synthase 1 (588 aa).

Over 1-28 (MKEKAAETMEIPEGIPKDLEPKHPTLWR) the chain is Cytoplasmic. The chain crosses the membrane as a helical span at residues 29-49 (IIYYSFGVVLLATITAAYVAE). Over 50–61 (FQVLKHEAILFS) the chain is Extracellular. A helical membrane pass occupies residues 62–82 (LGLYGLAMLLHLMMQSLFAFL). The Cytoplasmic segment spans residues 83–411 (EIRRVNKSEL…IWMTYESVVS (329 aa)). The helical transmembrane segment at 412 to 432 (FIFPFFITATVIRLIYAGTIW) threads the bilayer. Asn433 is a topological domain (extracellular). Residues 434–454 (VVWLLLCIQIMSLFKSIYACW) form a helical membrane-spanning segment. The Cytoplasmic segment spans residues 455–456 (LR). The helical transmembrane segment at 457 to 477 (GNFIMLLMSLYSMLYMTGLLP) threads the bilayer. Topologically, residues 478–505 (SKYFALLTLNKTGWGTSGRKKIVGNYMP) are extracellular. Residues 506–526 (ILPLSIWAAVLCGGVGYSIYM) form a helical membrane-spanning segment. The Cytoplasmic portion of the chain corresponds to 527–543 (DCQNDWSTPEKQKEMYH). Residues 544–564 (LLYGCVGYVMYWVIMAVMYWV) form a helical membrane-spanning segment. Topologically, residues 565-588 (WVKRCCRKRSQTVTLVHDIPDMCV) are extracellular.

The protein belongs to the NodC/HAS family. Requires Mg(2+) as cofactor. In terms of tissue distribution, expression moves as a gradient through the embryo. The mRNA is first expressed in the animal region of the blastula, and by early gastrula is found everywhere except in the outer layer of the dorsal blastopore lip. By mid-gastrula, protein is present in the inner ectodermal layer and the endoderm, then disappears from dorsal ectoderm as the neural plate is induced and later decays in a dorsoventral direction. Last expressed in ventral regions of the gut at the tailbud stage (at protein level).

Its subcellular location is the membrane. The catalysed reaction is [hyaluronan](n) + UDP-N-acetyl-alpha-D-glucosamine = N-acetyl-beta-D-glucosaminyl-(1-&gt;4)-[hyaluronan](n) + UDP + H(+). The enzyme catalyses N-acetyl-beta-D-glucosaminyl-(1-&gt;4)-[hyaluronan](n) + UDP-alpha-D-glucuronate = [hyaluronan](n+1) + UDP + H(+). It participates in glycan biosynthesis; hyaluronan biosynthesis. Catalyzes the addition of GlcNAc or GlcUA monosaccharides to the nascent hyaluronan polymer. Therefore, it is essential to hyaluronan synthesis a major component of most extracellular matrices that has a structural role in tissues architectures and regulates cell adhesion, migration and differentiation. Also able to catalyze the synthesis of chito-oligosaccharide depending on the substrate. In Xenopus laevis (African clawed frog), this protein is Hyaluronan synthase 1 (has1).